The chain runs to 273 residues: 3-keto-5-aminohexanoate cleavage enzyme (273 aa).

(5S)-5-amino-3-oxohexanoate is bound at residue Glu14. Zn(2+)-binding residues include His46 and His48. Ser82, Gly85, and Ser106 together coordinate (5S)-5-amino-3-oxohexanoate. Glu227 lines the Zn(2+) pocket.

The protein belongs to the BKACE family. Kce subfamily. As to quaternary structure, homotetramer. Requires Zn(2+) as cofactor.

It catalyses the reaction (5S)-5-amino-3-oxohexanoate + acetyl-CoA = (3S)-3-aminobutanoyl-CoA + acetoacetate. It functions in the pathway amino-acid degradation; L-lysine degradation via acetate pathway. Its function is as follows. Involved in the anaerobic fermentation of lysine. Catalyzes the reversible reaction between 3-keto-5-aminohexanoate (KAH) and acetyl-CoA to form 3-aminobutyryl-CoA and acetoacetate. The reaction involves the deprotonation of KAH, the nucleophilic addition onto acetyl-CoA and the intramolecular transfer of the CoA moiety. The protein is 3-keto-5-aminohexanoate cleavage enzyme of Acetoanaerobium sticklandii (strain ATCC 12662 / DSM 519 / JCM 1433 / CCUG 9281 / NCIMB 10654 / HF) (Clostridium sticklandii).